Consider the following 139-residue polypeptide: Flagellar basal-body rod protein FlgC (139 aa).

This sequence belongs to the flagella basal body rod proteins family. As to quaternary structure, the basal body constitutes a major portion of the flagellar organelle and consists of four rings (L,P,S, and M) mounted on a central rod. The rod consists of about 26 subunits of FlgG in the distal portion, and FlgB, FlgC and FlgF are thought to build up the proximal portion of the rod with about 6 subunits each.

Its subcellular location is the bacterial flagellum basal body. The chain is Flagellar basal-body rod protein FlgC (flgC) from Agrobacterium fabrum (strain C58 / ATCC 33970) (Agrobacterium tumefaciens (strain C58)).